Reading from the N-terminus, the 725-residue chain is Glutamine-dependent NAD(+) synthetase (725 aa).

The CN hydrolase domain occupies 5–275; that stretch reads VTVATCALNQ…VEVLTATLDL (271 aa). Glu45 (proton acceptor; for glutaminase activity) is an active-site residue. The For glutaminase activity role is filled by Lys114. Catalysis depends on Cys175, which acts as the Nucleophile; for glutaminase activity. The ligase stretch occupies residues 325–706; it reads YHRPEEEISL…KTSQTLEEQI (382 aa). 355–362 contacts ATP; it reads PLSGGVDS. Ser357 is an active-site residue.

The protein in the C-terminal section; belongs to the NAD synthetase family. As to quaternary structure, homohexamer.

It catalyses the reaction deamido-NAD(+) + L-glutamine + ATP + H2O = L-glutamate + AMP + diphosphate + NAD(+) + H(+). Its pathway is cofactor biosynthesis; NAD(+) biosynthesis; NAD(+) from deamido-NAD(+) (L-Gln route): step 1/1. Its function is as follows. Catalyzes the final step of the nicotinamide adenine dinucleotide (NAD) de novo synthesis pathway, the ATP-dependent amidation of deamido-NAD using L-glutamine as a nitrogen source. The chain is Glutamine-dependent NAD(+) synthetase (Nadsyn1) from Rattus norvegicus (Rat).